The sequence spans 447 residues: NAC domain containing protein 50 (447 aa).

Residues Met1–Ala21 are disordered. The region spanning Leu27–Lys178 is the NAC domain. The DNA-binding element occupies Leu126 to Pro184. 2 disordered regions span residues Asp246–Ala303 and Lys371–Val392. The segment covering Thr281–Pro293 has biased composition (basic and acidic residues). Residues Val392–Ser447 are a coiled coil.

In terms of assembly, interacts with JMJ14 and NAC052. In terms of tissue distribution, mostly expressed in floral organs, and, at low levels, in other organs.

It is found in the nucleus. Transcriptional repressor that binds to the motif 5'-(C/T)A(C/A)G-3' in the promoter of target genes. Also binds to the 5'-CTTGNNNNNCAAG-3' consensus sequence in chromatin. Can bind to the mitochondrial dysfunction motif (MDM) present in the upstream regions of mitochondrial dysfunction stimulon (MDS) genes involved in mitochondrial retrograde regulation (MRR). Together with NAC051/NAC052 and JMJ14, regulates gene expression and flowering time by associating with the histone demethylase JMJ14, probably by the promotion of RNA-mediated gene silencing. The polypeptide is NAC domain containing protein 50 (Arabidopsis thaliana (Mouse-ear cress)).